The following is a 403-amino-acid chain: Renin (403 aa).

An N-terminal signal peptide occupies residues 1 to 22 (MARCRMPRWGLLLVLWGSCTFG). Residues 23–65 (LPADTGAFRRIFLKKMPSIRESLKERGVDVAGLGAEWNQFTKR) constitute a propeptide, activation peptide. An N-linked (GlcNAc...) asparagine glycan is attached at asparagine 70. In terms of domain architecture, Peptidase A1 spans 85–400 (YYGEIGIGTP…DRHNNRIGFA (316 aa)). The active site involves aspartate 103. A disulfide bridge links cysteine 116 with cysteine 123. Asparagine 140 is a glycosylation site (N-linked (GlcNAc...) asparagine). Residues cysteine 279 and cysteine 283 are joined by a disulfide bond. Aspartate 288 is a catalytic residue. A disulfide bridge links cysteine 322 with cysteine 359.

This sequence belongs to the peptidase A1 family. As to quaternary structure, interacts with ATP6AP2.

It localises to the secreted. Its subcellular location is the membrane. The enzyme catalyses Cleavage of Leu-|-Xaa bond in angiotensinogen to generate angiotensin I.. Its activity is regulated as follows. Interaction with ATP6AP2 results in a 5-fold increased efficiency in angiotensinogen processing. In terms of biological role, renin is a highly specific endopeptidase, whose only known function is to generate angiotensin I from angiotensinogen in the plasma, initiating a cascade of reactions that produce an elevation of blood pressure and increased sodium retention by the kidney. This is Renin (REN) from Canis lupus familiaris (Dog).